Consider the following 168-residue polypeptide: Large ribosomal subunit protein uL10 (168 aa).

This sequence belongs to the universal ribosomal protein uL10 family. In terms of assembly, part of the ribosomal stalk of the 50S ribosomal subunit. The N-terminus interacts with L11 and the large rRNA to form the base of the stalk. The C-terminus forms an elongated spine to which L12 dimers bind in a sequential fashion forming a multimeric L10(L12)X complex.

Functionally, forms part of the ribosomal stalk, playing a central role in the interaction of the ribosome with GTP-bound translation factors. This chain is Large ribosomal subunit protein uL10, found in Pediococcus pentosaceus (strain ATCC 25745 / CCUG 21536 / LMG 10740 / 183-1w).